The sequence spans 354 residues: Ferrochelatase (354 aa).

Positions 214 and 295 each coordinate Fe cation.

The protein belongs to the ferrochelatase family.

Its subcellular location is the cytoplasm. It carries out the reaction heme b + 2 H(+) = protoporphyrin IX + Fe(2+). Its pathway is porphyrin-containing compound metabolism; protoheme biosynthesis; protoheme from protoporphyrin-IX: step 1/1. Functionally, catalyzes the ferrous insertion into protoporphyrin IX. The sequence is that of Ferrochelatase from Burkholderia cenocepacia (strain HI2424).